The following is a 199-amino-acid chain: FMN-dependent NADH:quinone oxidoreductase (199 aa).

Ser-10 contributes to the FMN binding site.

The protein belongs to the azoreductase type 1 family. Homodimer. FMN is required as a cofactor.

It catalyses the reaction 2 a quinone + NADH + H(+) = 2 a 1,4-benzosemiquinone + NAD(+). It carries out the reaction N,N-dimethyl-1,4-phenylenediamine + anthranilate + 2 NAD(+) = 2-(4-dimethylaminophenyl)diazenylbenzoate + 2 NADH + 2 H(+). Its function is as follows. Quinone reductase that provides resistance to thiol-specific stress caused by electrophilic quinones. Also exhibits azoreductase activity. Catalyzes the reductive cleavage of the azo bond in aromatic azo compounds to the corresponding amines. In Cellvibrio japonicus (strain Ueda107) (Pseudomonas fluorescens subsp. cellulosa), this protein is FMN-dependent NADH:quinone oxidoreductase.